A 389-amino-acid chain; its full sequence is Lipid-A-disaccharide synthase (389 aa).

It belongs to the LpxB family.

It catalyses the reaction a lipid X + a UDP-2-N,3-O-bis[(3R)-3-hydroxyacyl]-alpha-D-glucosamine = a lipid A disaccharide + UDP + H(+). It functions in the pathway bacterial outer membrane biogenesis; LPS lipid A biosynthesis. Its function is as follows. Condensation of UDP-2,3-diacylglucosamine and 2,3-diacylglucosamine-1-phosphate to form lipid A disaccharide, a precursor of lipid A, a phosphorylated glycolipid that anchors the lipopolysaccharide to the outer membrane of the cell. The sequence is that of Lipid-A-disaccharide synthase from Burkholderia lata (strain ATCC 17760 / DSM 23089 / LMG 22485 / NCIMB 9086 / R18194 / 383).